Reading from the N-terminus, the 238-residue chain is Sugar fermentation stimulation protein homolog (238 aa).

This sequence belongs to the SfsA family.

The sequence is that of Sugar fermentation stimulation protein homolog from Vibrio vulnificus (strain CMCP6).